An 81-amino-acid chain; its full sequence is Bursicon (81 aa).

As to quaternary structure, heterodimer of burs and pburs. Central nervous system. Coexpressed with CCAP in most CCAP-specific neurons. Coexpressed with pburs in the large bilateral lateral neurosecretory neurons of the first three unfused abdominal ganglia and in all anterior bilateral cell pairs in the thoracic ganglia.

Its subcellular location is the secreted. Final heterodimeric neurohormone released at the end of the molting cycle, involved in the sclerotization (tanning) of the insect cuticle, melanization and wing spreading. In Periplaneta americana (American cockroach), this protein is Bursicon (burs).